Reading from the N-terminus, the 598-residue chain is Fumarate reductase flavoprotein subunit (598 aa).

FAD contacts are provided by residues 12-16 (GAGGA), 36-38 (ISK), 44-52 (SHTVAAEGG), 156-158 (HFV), and D212. H45 bears the Tele-8alpha-FAD histidine mark. Active-site residues include H233 and R249. Residues 356-357 (HY), E380, and 391-397 (RLGSNSL) contribute to the FAD site. The disordered stretch occupies residues 577 to 598 (AKRVYGGEATAQDKQNKEKANG).

It belongs to the FAD-dependent oxidoreductase 2 family. FRD/SDH subfamily. Part of an enzyme complex containing four subunits: a flavoprotein (FrdA), an iron-sulfur protein (FrdB), and two hydrophobic anchor proteins (FrdC and FrdD). FAD is required as a cofactor.

It localises to the cell inner membrane. The enzyme catalyses a quinone + succinate = fumarate + a quinol. It carries out the reaction a menaquinone + succinate = a menaquinol + fumarate. Its function is as follows. Two distinct, membrane-bound, FAD-containing enzymes are responsible for the catalysis of fumarate and succinate interconversion; the fumarate reductase is used in anaerobic growth, and the succinate dehydrogenase is used in aerobic growth. The polypeptide is Fumarate reductase flavoprotein subunit (frdA) (Proteus vulgaris).